Reading from the N-terminus, the 581-residue chain is Protein phosphatase 2C 70 (581 aa).

The Extracellular segment spans residues Met1–Asn7. The chain crosses the membrane as a helical span at residues Ile8–Cys28. Residues Lys29–Leu581 are Cytoplasmic-facing. The FHA domain maps to Val208–Ile259. The region spanning Lys304 to Phe577 is the PPM-type phosphatase domain. Positions 346, 347, 521, and 568 each coordinate Mn(2+).

Association of RLK5 with kapp domain is dependent on phosphorylation of RLK5 and can be abolished by dephosphorylation. Interacts with SERK1 and CDC48A. Component of the SERK1 signaling complex, composed of KAPP, CDC48A, GRF6 or GRF7, SERK1, SERK2, SERK3/BAK1 and BRI1. Interacts with CLV1. It depends on Mg(2+) as a cofactor. The cofactor is Mn(2+). Expressed in all tissues examined.

The protein localises to the cell membrane. The enzyme catalyses O-phospho-L-seryl-[protein] + H2O = L-seryl-[protein] + phosphate. It carries out the reaction O-phospho-L-threonyl-[protein] + H2O = L-threonyl-[protein] + phosphate. In terms of biological role, dephosphorylates the Ser/Thr receptor-like kinase RLK5. May function as a signaling component in a pathway involving RLK5. Binds and dephosphorylates CLAVATA1 (CLV1). Functions as a negative regulator of the CLV1 signaling in plant development. Dephosphorylates SERK1 receptor kinase on threonine residues in the A-loop. Dephosphorylation of SERK1 controls SERK1 internalization. Component of a signaling pathway which mediates adaptation to NaCl stress. Is not a component of the SALT OVERLY SENSITIVE (SOS) pathway. In Arabidopsis thaliana (Mouse-ear cress), this protein is Protein phosphatase 2C 70.